The following is a 372-amino-acid chain: tRNA 2-selenouridine synthase (372 aa).

Residues 19 to 142 (LASGHPIMDV…MRQYLIDTID (124 aa)) form the Rhodanese domain. Catalysis depends on Cys102, which acts as the S-selanylcysteine intermediate.

It belongs to the SelU family. As to quaternary structure, monomer.

The enzyme catalyses 5-methylaminomethyl-2-thiouridine(34) in tRNA + selenophosphate + (2E)-geranyl diphosphate + H2O + H(+) = 5-methylaminomethyl-2-selenouridine(34) in tRNA + (2E)-thiogeraniol + phosphate + diphosphate. It catalyses the reaction 5-methylaminomethyl-2-thiouridine(34) in tRNA + (2E)-geranyl diphosphate = 5-methylaminomethyl-S-(2E)-geranyl-thiouridine(34) in tRNA + diphosphate. The catalysed reaction is 5-methylaminomethyl-S-(2E)-geranyl-thiouridine(34) in tRNA + selenophosphate + H(+) = 5-methylaminomethyl-2-(Se-phospho)selenouridine(34) in tRNA + (2E)-thiogeraniol. It carries out the reaction 5-methylaminomethyl-2-(Se-phospho)selenouridine(34) in tRNA + H2O = 5-methylaminomethyl-2-selenouridine(34) in tRNA + phosphate. Functionally, involved in the post-transcriptional modification of the uridine at the wobble position (U34) of tRNA(Lys), tRNA(Glu) and tRNA(Gln). Catalyzes the conversion of 2-thiouridine (S2U-RNA) to 2-selenouridine (Se2U-RNA). Acts in a two-step process involving geranylation of 2-thiouridine (S2U) to S-geranyl-2-thiouridine (geS2U) and subsequent selenation of the latter derivative to 2-selenouridine (Se2U) in the tRNA chain. This Shewanella loihica (strain ATCC BAA-1088 / PV-4) protein is tRNA 2-selenouridine synthase.